The primary structure comprises 119 residues: Large ribosomal subunit protein uL14 (119 aa).

The protein belongs to the universal ribosomal protein uL14 family. Part of the 50S ribosomal subunit. Forms a cluster with proteins L3 and L19. In the 70S ribosome, L14 and L19 interact and together make contacts with the 16S rRNA in bridges B5 and B8.

Binds to 23S rRNA. Forms part of two intersubunit bridges in the 70S ribosome. In Neorickettsia sennetsu (strain ATCC VR-367 / Miyayama) (Ehrlichia sennetsu), this protein is Large ribosomal subunit protein uL14.